Reading from the N-terminus, the 1167-residue chain is MLEGCILAGSRQIESTTNNSVPGAPNRISFAKLREPLEVPGLLDVQTESFEWLIGAEDWFQRAADRGDVDPKGGLQEVLEELSPIEDFSGSMSLSFSDPRFDEVKAPVDECKDKDMTYAAPLFVTAEFINNNTGEIKSQTVFMGDFPMMTEKGTFIINGTERVVVSQLVRSPGVYFDESIDKSTEKTLHSVKVIPGRGAWLEFDVDKRDTVGVRIDRKRRQPVTVLLKALGWTNEQIVERFGFSEIMMSTLEKDNTAGTDEALLDIYRKLRPGEPPTKESAQTLLENLFFKEKRYDLARVGRYKVNKKLGLNVGQPITSSTLTEEDVVATIEYLVRLHQGDQTMTAPGGSEVPVEVDDIDHFGNRRLRTVGELIQNQIRVGLSRMERVVRERMTTQDVEAITPQTLINIRPVVAAIKEFFGTSQLSQFMDQNNPLSGLTHKRRLSALGPGGLSRERAGLEVRDVHSSHYGRMCPIETPEGPNIGLIGSLSVYARVNPFGFIETPYRKVTDGVVTDQIDYLTADEEDRHVVAQANSPLDGDGHFEEERVLVRRKGGEVEFVSAAEVDYMDVSPRQMVSVATAMIPFLEHDDANRALMGANMQRQAVPLVRSEAPLVGTGMELRAAIDAGDVVVTEKAGVVEEVSADYITVMADDGTRHTYRMRKFARSNHGTCANQRPIVDAGQRVESGQVLADGPCTENGEMALGKNLLVAIMPWEGHNYEDAIILSNRLVEEDVLTSIHIEEHEIDARDTKLGAEEITRDIPNVSDEVLADLDERGIIRIGAEVRDGDILVGKVTPKGETELTPEERLLRAIFGEKAREVRDTSLKVPHGESGKVIGIRVFSREDDDELPAGVNELVRVYVAQKRKISDGDKLAGRHGNKGVIGKILPVEDMPFLPDGTPVDIILNTHGVPRRMNIGQILETHLGWVAKAGWNIDVAAGTPEWAAKLPEQMLSAPADSIVATPVFDGAQEGELQGLLGSTLPNRDGETMVNADGKATLFDGRSGEPFPYPVTVGYMYILKLHHLVDDKIHARSTGPYSMITQQPLGGKAQFGGQRFGEMECWAMQAYGAAYTLQELLTIKSDDTVGRVKVYEAIVKGENIPEPGIPESFKVLLKELQSLCLNVEVLSSDGAAIEMRDGDDEDLERAAANLGINLSRNESASVEDLA.

Belongs to the RNA polymerase beta chain family. In terms of assembly, the RNAP catalytic core consists of 2 alpha, 1 beta, 1 beta' and 1 omega subunit. When a sigma factor is associated with the core the holoenzyme is formed, which can initiate transcription.

The catalysed reaction is RNA(n) + a ribonucleoside 5'-triphosphate = RNA(n+1) + diphosphate. DNA-dependent RNA polymerase catalyzes the transcription of DNA into RNA using the four ribonucleoside triphosphates as substrates. This chain is DNA-directed RNA polymerase subunit beta, found in Mycolicibacterium vanbaalenii (strain DSM 7251 / JCM 13017 / BCRC 16820 / KCTC 9966 / NRRL B-24157 / PYR-1) (Mycobacterium vanbaalenii).